Here is a 407-residue protein sequence, read N- to C-terminus: Arginine deiminase (407 aa).

Cys397 functions as the Amidino-cysteine intermediate in the catalytic mechanism.

The protein belongs to the arginine deiminase family.

It localises to the cytoplasm. The enzyme catalyses L-arginine + H2O = L-citrulline + NH4(+). It functions in the pathway amino-acid degradation; L-arginine degradation via ADI pathway; carbamoyl phosphate from L-arginine: step 1/2. This Salmonella arizonae (strain ATCC BAA-731 / CDC346-86 / RSK2980) protein is Arginine deiminase.